The following is a 389-amino-acid chain: Formate-dependent phosphoribosylglycinamide formyltransferase (389 aa).

Residues 21–22 (EL) and glutamate 81 contribute to the N(1)-(5-phospho-beta-D-ribosyl)glycinamide site. Residues arginine 113, lysine 154, 159-164 (SSGKGQ), 194-197 (EEFI), and glutamate 202 contribute to the ATP site. The ATP-grasp domain maps to 118-307 (RLAAEKLGLK…EFEIHVRAIL (190 aa)). Residues glutamate 266 and glutamate 278 each coordinate Mg(2+). Residues aspartate 285, lysine 353, and 360 to 361 (RR) each bind N(1)-(5-phospho-beta-D-ribosyl)glycinamide.

The protein belongs to the PurK/PurT family. As to quaternary structure, homodimer.

It carries out the reaction N(1)-(5-phospho-beta-D-ribosyl)glycinamide + formate + ATP = N(2)-formyl-N(1)-(5-phospho-beta-D-ribosyl)glycinamide + ADP + phosphate + H(+). It functions in the pathway purine metabolism; IMP biosynthesis via de novo pathway; N(2)-formyl-N(1)-(5-phospho-D-ribosyl)glycinamide from N(1)-(5-phospho-D-ribosyl)glycinamide (formate route): step 1/1. Involved in the de novo purine biosynthesis. Catalyzes the transfer of formate to 5-phospho-ribosyl-glycinamide (GAR), producing 5-phospho-ribosyl-N-formylglycinamide (FGAR). Formate is provided by PurU via hydrolysis of 10-formyl-tetrahydrofolate. The protein is Formate-dependent phosphoribosylglycinamide formyltransferase of Methanocaldococcus jannaschii (strain ATCC 43067 / DSM 2661 / JAL-1 / JCM 10045 / NBRC 100440) (Methanococcus jannaschii).